Consider the following 669-residue polypeptide: Glutamate--cysteine ligase (669 aa).

It belongs to the glutamate--cysteine ligase type 3 family. As to quaternary structure, heterodimer of a catalytic heavy chain and a regulatory light chain.

It catalyses the reaction L-cysteine + L-glutamate + ATP = gamma-L-glutamyl-L-cysteine + ADP + phosphate + H(+). It functions in the pathway sulfur metabolism; glutathione biosynthesis; glutathione from L-cysteine and L-glutamate: step 1/2. Functionally, catalyzes the ATP-dependent ligation of L-glutamate and L-cysteine and participates in the first and rate-limiting step in glutathione biosynthesis. This is Glutamate--cysteine ligase (gcs1) from Schizosaccharomyces pombe (strain 972 / ATCC 24843) (Fission yeast).